The sequence spans 697 residues: Potassium-transporting ATPase ATP-binding subunit (697 aa).

A run of 4 helical transmembrane segments spans residues 36-56 (VMFVVAIVSALTSVLFLRDLI), 66-86 (LQIIIWLWFTVLFANFAEAVA), 218-238 (IALNILLVGMTLIFVLATATI), and 253-273 (VLVALFVTLIPTTIGALLSAI). Catalysis depends on Asp306, which acts as the 4-aspartylphosphate intermediate. ATP-binding positions include Asp343, Glu347, 376–383 (FTAQTRMS), and Lys394. The Mg(2+) site is built by Asp526 and Asp530. Helical transmembrane passes span 595-615 (YFAIIPAMFAVFYVAPGQSTG), 631-651 (AILSAIIFNALIIIALIPLSL), and 669-689 (LLVYGLGGIIVPFVGIKIIDM).

Belongs to the cation transport ATPase (P-type) (TC 3.A.3) family. Type IA subfamily. As to quaternary structure, the system is composed of three essential subunits: KdpA, KdpB and KdpC.

It is found in the cell inner membrane. The enzyme catalyses K(+)(out) + ATP + H2O = K(+)(in) + ADP + phosphate + H(+). Functionally, part of the high-affinity ATP-driven potassium transport (or Kdp) system, which catalyzes the hydrolysis of ATP coupled with the electrogenic transport of potassium into the cytoplasm. This subunit is responsible for energy coupling to the transport system and for the release of the potassium ions to the cytoplasm. This is Potassium-transporting ATPase ATP-binding subunit from Mesorhizobium japonicum (strain LMG 29417 / CECT 9101 / MAFF 303099) (Mesorhizobium loti (strain MAFF 303099)).